The sequence spans 624 residues: Glycosyltransferase AglD (624 aa).

Asp201 is a catalytic residue. 8 consecutive transmembrane segments (helical) span residues 260–280, 285–305, 381–401, 427–447, 496–518, 532–552, 556–576, and 587–607; these read VTIVAGLLLTVLALALMTLYI, VISVLGDADPALVAAAAVIYV, LLTIAGLAGVVLVGLAATGGL, AAYVATGVGVVAILGVLGIAL, VGLTSLAIWTVDVVTAVVVLLAL, FFAVSVGNLAKVLPLSPGGVG, IAFTVFMAALAPVTPAAALAA, and VTIVGGVGSMLSLNVSLTTAV.

This sequence belongs to the glycosyltransferase 2 family.

It localises to the cell membrane. Its pathway is cell surface structure biogenesis; S-layer biogenesis. Its function is as follows. Involved in the assembly of a N-linked pentasaccharide that decorates the S-layer glycoprotein and flagellins. Catalyzes the addition of the mannose found at position 5 of the pentasaccharide to its own distinct dolichol phosphate carrier. The protein is Glycosyltransferase AglD (aglD) of Haloferax volcanii (strain ATCC 29605 / DSM 3757 / JCM 8879 / NBRC 14742 / NCIMB 2012 / VKM B-1768 / DS2) (Halobacterium volcanii).